The following is a 365-amino-acid chain: MRFECSHFPLFLIILTCHISPLKSSQNYQWSYDSDVFGGPHFWGLVEKDWWMCKKGRLQSPIDIQPDRLLFDASVKPVSYAELNFFLIIYLTISLKLMRYIFTCAHLFACNKKLGTWNRIFGANIAKFRAWVVYIIIFHAQVPQLQVVSEFVNTGQMVRVRIGYSSKKPSVNITSGPLYGYRYRVQRIDFHMGRKNENGSEHTINGRRFPMEVQLVAYNTDLYPNFTSASKSPHGIAILSVLVDFGPETNQELIKLTIATASISYKDQRVQLADFEPWRLLPFTRDIITYEGSLTSPGCHETVTWIILNQPIFIKKEHFEEWSHLYLSMEGAEKVPVAPNFRKIQETNNRLVRTNIQHKVWIFLS.

Residues M1–S25 form the signal peptide. One can recognise an Alpha-carbonic anhydrase domain in the interval Y28 to I356. The active site involves Y223. Residues T295 and T295 to S296 each bind substrate.

This sequence belongs to the alpha-carbonic anhydrase family.

It localises to the secreted. The chain is Putative carbonic anhydrase-like protein 1 (cah-1) from Caenorhabditis elegans.